The primary structure comprises 341 residues: D-aspartate oxidase (341 aa).

Positions 36, 37, 43, 44, 50, 307, 311, and 312 each coordinate FAD. A Microbody targeting signal motif is present at residues 339 to 341 (SKL).

This sequence belongs to the DAMOX/DASOX family. In terms of assembly, dimer or tetramer. Interacts with PEX5; the interaction is direct and required for localization of DDO to the peroxisome. FAD serves as cofactor. Expressed in the small intestine (at protein level). Expressed in the ependymal cell layer of the telencephalic ventricles, hippocampus, thalamus, cerebellum, midbrain region, pons, olfactory bulbs, and cortex. Repressed in the testis. As to expression, expressed in the kidney, liver, stomach, pancreas, uterus, lactating breast, involuting mammary gland, brain, heart, lung, and skin. In terms of tissue distribution, expressed in kidney, liver, pancreas, and in the mammary gland regardless of lactation status.

The protein resides in the peroxisome matrix. It localises to the cytoplasm. The protein localises to the cytosol. The catalysed reaction is D-aspartate + O2 + H2O = oxaloacetate + H2O2 + NH4(+). It catalyses the reaction D-glutamate + O2 + H2O = H2O2 + 2-oxoglutarate + NH4(+). Its activity is regulated as follows. Inhibited by the benzodiazepine olanzapine; chronic systemic administration of the benzodiazepine increases levels of D-aspartate and L-glutamate in the prefrontal cortex. Efficiently inhibited by 5-aminonicotinic acid (5-AN) and 1,4-Dihydropyrido[2,3-b]pyrazine-2,3-dione (DPPD). Inhibited by aminooxyacetic acid, thiolactomycin, anthranilic acid, malonate, meso-tartrate and L-tartrate. Benzoate has no effect on activity. In terms of biological role, selectively catalyzes the oxidative deamination of acidic amino acids. Suppresses the level of D-aspartate in the brain, an amino acid that can act as an agonist for glutamate receptors. Protects the organism from the toxicity of D-amino acids. May also function in the intestine. Its function is as follows. Selectively catalyzes the oxidative deamination of acidic amino acids. Functionally, does not exhibit D-aspartate oxidase activity. This chain is D-aspartate oxidase (Ddo), found in Mus musculus (Mouse).